The chain runs to 677 residues: O-fucosyltransferase 27 (677 aa).

Residues 15 to 35 (WIGLLGLVLSAFSLLVHFLLA) form a helical; Signal-anchor for type II membrane protein membrane-spanning segment. An N-linked (GlcNAc...) asparagine glycan is attached at asparagine 130. The disordered stretch occupies residues 410-437 (PPSIEVETKHDSLKSTRQRPQPLPPPPA). N-linked (GlcNAc...) asparagine glycosylation is found at asparagine 542 and asparagine 592. A disordered region spans residues 619 to 677 (NAEKEEDLDEEDLSSSGLFFGHKESGGNNNGNNETVNSEANNKEEGQLEDQEELEGSER). A compositionally biased stretch (acidic residues) spans 622–631 (KEEDLDEEDL). A compositionally biased stretch (low complexity) spans 644 to 658 (GGNNNGNNETVNSEA). N-linked (GlcNAc...) asparagine glycosylation is present at asparagine 651. Residues 665–677 (QLEDQEELEGSER) are compositionally biased toward acidic residues.

Belongs to the glycosyltransferase GT106 family.

The protein localises to the membrane. The protein operates within glycan metabolism. The sequence is that of O-fucosyltransferase 27 from Arabidopsis thaliana (Mouse-ear cress).